The primary structure comprises 479 residues: GTPase Obg (479 aa).

Residues 2–159 (PRFVDRVVIH…RDLTLELKTV (158 aa)) enclose the Obg domain. The OBG-type G domain maps to 160–340 (ADVGLVGFPS…LIFGLWQMVS (181 aa)). Residues 166–173 (GFPSAGKS), 191–195 (FTTLV), 212–215 (DVPG), 292–295 (NKID), and 321–323 (STV) each bind GTP. 2 residues coordinate Mg(2+): serine 173 and threonine 193. One can recognise an OCT domain in the interval 358–436 (PVPVDDSGFD…IGEMTFDWEP (79 aa)). The segment at 438–479 (TPAGGHVAMSGRGTDVRLERSDRVGAAERKAARRQRRERDDD) is disordered. Basic and acidic residues predominate over residues 451-467 (TDVRLERSDRVGAAERK).

The protein belongs to the TRAFAC class OBG-HflX-like GTPase superfamily. OBG GTPase family. In terms of assembly, monomer. Mg(2+) serves as cofactor.

Its subcellular location is the cytoplasm. Its function is as follows. An essential GTPase which binds GTP, GDP and possibly (p)ppGpp with moderate affinity, with high nucleotide exchange rates and a fairly low GTP hydrolysis rate. Plays a role in control of the cell cycle, stress response, ribosome biogenesis and in those bacteria that undergo differentiation, in morphogenesis control. This Mycobacterium ulcerans (strain Agy99) protein is GTPase Obg.